Here is a 365-residue protein sequence, read N- to C-terminus: uncharacterized protein (365 aa).

A coiled-coil region spans residues 18 to 46 (TAQEALTLIEKLDSDYKEKEEKITALSVH).

This is an uncharacterized protein from Bacillus subtilis (strain 168).